The chain runs to 169 residues: Der GTPase-activating protein YihI (169 aa).

Disordered regions lie at residues 1-100 (MKPS…AELE) and 144-169 (GLSYDDDEEEEEDEKQEDMMRLLRGN). Over residues 10-19 (SKGHAKARRK) the composition is skewed to basic residues. Basic and acidic residues predominate over residues 20 to 30 (TREELDQEARD). Positions 31–40 (RKRQKKRRGH) are enriched in basic residues. Positions 49–58 (GNTSSGSKGQ) are enriched in polar residues. The segment covering 147–159 (YDDDEEEEEDEKQ) has biased composition (acidic residues). The span at 160–169 (EDMMRLLRGN) shows a compositional bias: basic and acidic residues.

The protein belongs to the YihI family. In terms of assembly, interacts with Der.

Functionally, a GTPase-activating protein (GAP) that modifies Der/EngA GTPase function. May play a role in ribosome biogenesis. The sequence is that of Der GTPase-activating protein YihI from Escherichia coli (strain SMS-3-5 / SECEC).